The sequence spans 230 residues: Cytidylate kinase (230 aa).

12-20 is a binding site for ATP; that stretch reads GPSGAGKGT.

Belongs to the cytidylate kinase family. Type 1 subfamily.

It is found in the cytoplasm. The catalysed reaction is CMP + ATP = CDP + ADP. It carries out the reaction dCMP + ATP = dCDP + ADP. This is Cytidylate kinase from Shewanella putrefaciens (strain CN-32 / ATCC BAA-453).